The chain runs to 370 residues: MPHQQILMLFGLLPVATNISTWWNFGSMLLACSTLQVLTGFFLAVHYTANINLAFSSIIHITRDVPYGWLMQNLHAIGASMFFICIYIHIARGLYYGSYLNKETWLSGTMLLIMLMATAFFGYVLPWGQMSFWAATVITNLLTAIPYLGNTMTTWLWGGFAINDPTLTRFFALHFILPFGIISLSSLHVILLHEEGSSNPLGTNPDIDKIPFHPYHTYKDLLMLTIMTILLLLIVSFSPDIFNDPDNFSKANPLVTPQHIKPEWYFLFAYGILRSIPNKLGGALALTMSIIILMTVPFTHTSKMRSMMFRPFMQMTFWMFAATFLVITWTATKPVEQPFTLIGQMASMLYFLFFISNPIMGWLENKIMKT.

Transmembrane regions (helical) follow at residues 25–45 (FGSM…FLAV), 69–90 (WLMQ…YIHI), 105–125 (WLSG…GYVL), and 170–190 (FFAL…LHVI). Heme b contacts are provided by H75 and H89. H174 and H188 together coordinate heme b. H193 lines the a ubiquinone pocket. The next 4 helical transmembrane spans lie at 218–238 (YKDL…VSFS), 280–300 (LGGA…PFTH), 312–332 (FMQM…WTAT), and 339–358 (FTLI…ISNP).

It belongs to the cytochrome b family. The cytochrome bc1 complex contains 3 respiratory subunits (MT-CYB, CYC1 and UQCRFS1), 2 core proteins (UQCRC1 and UQCRC2) and probably 6 low-molecular weight proteins. It depends on heme b as a cofactor.

It localises to the mitochondrion inner membrane. Component of the ubiquinol-cytochrome c reductase complex (complex III or cytochrome b-c1 complex) that is part of the mitochondrial respiratory chain. The b-c1 complex mediates electron transfer from ubiquinol to cytochrome c. Contributes to the generation of a proton gradient across the mitochondrial membrane that is then used for ATP synthesis. The protein is Cytochrome b (MT-CYB) of Eunectes murinus (Green anaconda).